Consider the following 208-residue polypeptide: Holliday junction branch migration complex subunit RuvA (208 aa).

Residues 1–64 are domain I; sequence MIGRLHGTVA…DDGQALYGFA (64 aa). Residues 65 to 143 form a domain II region; it reads SRAERDLFRV…GLLPAASGGV (79 aa). The disordered stretch occupies residues 139–162; sequence ASGGVPARTGSGEQLDAPAGPQGS. The interval 144-157 is flexible linker; that stretch reads PARTGSGEQLDAPA. The segment at 158–208 is domain III; that stretch reads GPQGSREDAVSALVALGYKPAEAGRLVNAVPGANDLPSEELIRRALQAAVR.

Belongs to the RuvA family. In terms of assembly, homotetramer. Forms an RuvA(8)-RuvB(12)-Holliday junction (HJ) complex. HJ DNA is sandwiched between 2 RuvA tetramers; dsDNA enters through RuvA and exits via RuvB. An RuvB hexamer assembles on each DNA strand where it exits the tetramer. Each RuvB hexamer is contacted by two RuvA subunits (via domain III) on 2 adjacent RuvB subunits; this complex drives branch migration. In the full resolvosome a probable DNA-RuvA(4)-RuvB(12)-RuvC(2) complex forms which resolves the HJ.

The protein localises to the cytoplasm. Its function is as follows. The RuvA-RuvB-RuvC complex processes Holliday junction (HJ) DNA during genetic recombination and DNA repair, while the RuvA-RuvB complex plays an important role in the rescue of blocked DNA replication forks via replication fork reversal (RFR). RuvA specifically binds to HJ cruciform DNA, conferring on it an open structure. The RuvB hexamer acts as an ATP-dependent pump, pulling dsDNA into and through the RuvAB complex. HJ branch migration allows RuvC to scan DNA until it finds its consensus sequence, where it cleaves and resolves the cruciform DNA. This chain is Holliday junction branch migration complex subunit RuvA, found in Alkalilimnicola ehrlichii (strain ATCC BAA-1101 / DSM 17681 / MLHE-1).